Reading from the N-terminus, the 164-residue chain is uncharacterized protein (164 aa).

Positions 144–164 (GFISPEKEHESEDMTSQSLVA) are disordered.

This is an uncharacterized protein from Synechocystis sp. (strain ATCC 27184 / PCC 6803 / Kazusa).